Here is a 374-residue protein sequence, read N- to C-terminus: Chaperone protein DnaJ (374 aa).

Residues 5–70 form the J domain; that stretch reads DYYKLLGVDR…EKRAGYDRYG (66 aa). Residues 136–214 form a CR-type zinc finger; that stretch reads GIQAPIHYVT…CNGSGRRRDE (79 aa). Positions 149, 152, 166, 169, 188, 191, 202, and 205 each coordinate Zn(2+). CXXCXGXG motif repeat units follow at residues 149–156, 166–173, 188–195, and 202–209; these read CDMCQGRG, CHTCQGSG, CTTCYGEG, and CKKCNGSG.

The protein belongs to the DnaJ family. Homodimer. Requires Zn(2+) as cofactor.

It is found in the cytoplasm. Participates actively in the response to hyperosmotic and heat shock by preventing the aggregation of stress-denatured proteins and by disaggregating proteins, also in an autonomous, DnaK-independent fashion. Unfolded proteins bind initially to DnaJ; upon interaction with the DnaJ-bound protein, DnaK hydrolyzes its bound ATP, resulting in the formation of a stable complex. GrpE releases ADP from DnaK; ATP binding to DnaK triggers the release of the substrate protein, thus completing the reaction cycle. Several rounds of ATP-dependent interactions between DnaJ, DnaK and GrpE are required for fully efficient folding. Also involved, together with DnaK and GrpE, in the DNA replication of plasmids through activation of initiation proteins. The polypeptide is Chaperone protein DnaJ (Wolbachia sp. subsp. Brugia malayi (strain TRS)).